The sequence spans 148 residues: Snaclec flavocetin-A subunit beta (148 aa).

The first 23 residues, 1-23 (MGQFIFVSFGFLVVATSLSGTEA), serve as a signal peptide directing secretion. 3 disulfide bridges follow: Cys27–Cys38, Cys55–Cys144, and Cys121–Cys136. Residues 34-145 (YDEHCYQVFQ…CSSKRYVVCK (112 aa)) enclose the C-type lectin domain.

The protein belongs to the snaclec family. Tetramer of heterodimers of alpha and beta subunits (alphabeta)(4); disulfide-linked. As to expression, expressed by the venom gland.

Its subcellular location is the secreted. Functionally, strong platelet aggregation inhibitor. Binds specifically to platelet glycoprotein Ibalpha (GP1BA) with high affinity and inhibits vWF-dependent platelet aggregation. Has also been observed to induce small agglutinates in washed platelets by binding to GPIb. In Protobothrops flavoviridis (Habu), this protein is Snaclec flavocetin-A subunit beta.